Reading from the N-terminus, the 500-residue chain is Protein nucleotidyltransferase YdiU (500 aa).

8 residues coordinate ATP: glycine 96, glycine 98, arginine 99, lysine 119, aspartate 131, glycine 132, arginine 182, and arginine 189. Aspartate 258 (proton acceptor) is an active-site residue. Mg(2+)-binding residues include asparagine 259 and aspartate 268. Aspartate 268 lines the ATP pocket.

It belongs to the SELO family. Requires Mg(2+) as cofactor. The cofactor is Mn(2+).

It carries out the reaction L-seryl-[protein] + ATP = 3-O-(5'-adenylyl)-L-seryl-[protein] + diphosphate. The catalysed reaction is L-threonyl-[protein] + ATP = 3-O-(5'-adenylyl)-L-threonyl-[protein] + diphosphate. It catalyses the reaction L-tyrosyl-[protein] + ATP = O-(5'-adenylyl)-L-tyrosyl-[protein] + diphosphate. The enzyme catalyses L-histidyl-[protein] + UTP = N(tele)-(5'-uridylyl)-L-histidyl-[protein] + diphosphate. It carries out the reaction L-seryl-[protein] + UTP = O-(5'-uridylyl)-L-seryl-[protein] + diphosphate. The catalysed reaction is L-tyrosyl-[protein] + UTP = O-(5'-uridylyl)-L-tyrosyl-[protein] + diphosphate. Nucleotidyltransferase involved in the post-translational modification of proteins. It can catalyze the addition of adenosine monophosphate (AMP) or uridine monophosphate (UMP) to a protein, resulting in modifications known as AMPylation and UMPylation. In Rhizobium johnstonii (strain DSM 114642 / LMG 32736 / 3841) (Rhizobium leguminosarum bv. viciae), this protein is Protein nucleotidyltransferase YdiU.